The sequence spans 637 residues: Threonine--tRNA ligase (637 aa).

In terms of domain architecture, TGS spans 1 to 61; the sequence is MPNVKLPDGN…KEDCSLIIVT (61 aa). A catalytic region spans residues 242-533; it reads DHRKLGKALD…LIEHYAGKLP (292 aa). Zn(2+) contacts are provided by C333, H384, and H510.

Belongs to the class-II aminoacyl-tRNA synthetase family. As to quaternary structure, homodimer. Zn(2+) is required as a cofactor.

The protein resides in the cytoplasm. The enzyme catalyses tRNA(Thr) + L-threonine + ATP = L-threonyl-tRNA(Thr) + AMP + diphosphate + H(+). Functionally, catalyzes the attachment of threonine to tRNA(Thr) in a two-step reaction: L-threonine is first activated by ATP to form Thr-AMP and then transferred to the acceptor end of tRNA(Thr). Also edits incorrectly charged L-seryl-tRNA(Thr). This is Threonine--tRNA ligase from Legionella pneumophila (strain Paris).